A 202-amino-acid chain; its full sequence is FMN-dependent NADH:quinone oxidoreductase (202 aa).

FMN contacts are provided by residues Ser10 and 95-98; that span reads MYNF.

Belongs to the azoreductase type 1 family. In terms of assembly, homodimer. Requires FMN as cofactor.

The catalysed reaction is 2 a quinone + NADH + H(+) = 2 a 1,4-benzosemiquinone + NAD(+). It carries out the reaction N,N-dimethyl-1,4-phenylenediamine + anthranilate + 2 NAD(+) = 2-(4-dimethylaminophenyl)diazenylbenzoate + 2 NADH + 2 H(+). Its function is as follows. Quinone reductase that provides resistance to thiol-specific stress caused by electrophilic quinones. Functionally, also exhibits azoreductase activity. Catalyzes the reductive cleavage of the azo bond in aromatic azo compounds to the corresponding amines. This chain is FMN-dependent NADH:quinone oxidoreductase, found in Pseudoalteromonas atlantica (strain T6c / ATCC BAA-1087).